We begin with the raw amino-acid sequence, 420 residues long: D-tagatose-1,6-bisphosphate aldolase subunit GatZ (420 aa).

It belongs to the GatZ/KbaZ family. GatZ subfamily. As to quaternary structure, forms a complex with GatY.

Its pathway is carbohydrate metabolism; D-tagatose 6-phosphate degradation; D-glyceraldehyde 3-phosphate and glycerone phosphate from D-tagatose 6-phosphate: step 2/2. Its function is as follows. Component of the tagatose-1,6-bisphosphate aldolase GatYZ that is required for full activity and stability of the Y subunit. Could have a chaperone-like function for the proper and stable folding of GatY. When expressed alone, GatZ does not show any aldolase activity. Is involved in the catabolism of galactitol. The chain is D-tagatose-1,6-bisphosphate aldolase subunit GatZ from Escherichia coli O9:H4 (strain HS).